A 46-amino-acid chain; its full sequence is Spectrin alpha chain, non-erythrocytic 1 (46 aa).

Spectrin repeat units lie at residues 1-5 (AQLAD), 7-14 (FHLQQFFR), 15-20 (SQLLGS), 21-26 (AHEVQR), 27-35 (LAQFVEHWK), and 39-46 (DLFLTFAK).

This sequence belongs to the spectrin family. In terms of assembly, associates with the gamma-tubulin complex in brain, but not in kidney, liver, sperm, or uterus. Like erythrocyte spectrin, the spectrin-like proteins are capable of forming dimers which can further associate to tetramers. Interacts with isoform 1 of ACP1. Interacts with CALM and EMD. Interacts (via C-terminal spectrin repeats) with TRPC4. Identified in a complex with ACTN4, CASK, IQGAP1, MAGI2, NPHS1 and SPTBN1. Interacts with CLN3; this interaction regulates the fodrin localization at the plasma membrane.

It is found in the cytoplasm. The protein resides in the cytoskeleton. Its subcellular location is the cell cortex. In terms of biological role, fodrin, which seems to be involved in secretion, interacts with calmodulin in a calcium-dependent manner and is thus candidate for the calcium-dependent movement of the cytoskeleton at the membrane. The polypeptide is Spectrin alpha chain, non-erythrocytic 1 (SPTAN1) (Capra hircus (Goat)).